Reading from the N-terminus, the 405-residue chain is Alpha-N-acetylgalactosaminidase (405 aa).

Cystine bridges form between Cys21-Cys63, Cys25-Cys32, and Cys111-Cys142. Residues 61-62 (DD) and Lys138 each bind substrate. Asp140 serves as the catalytic Nucleophile. The N-linked (GlcNAc...) asparagine glycan is linked to Asn161. Cys171 and Cys193 are disulfide-bonded. Ser172 contacts substrate. Residue Asn185 is glycosylated (N-linked (GlcNAc...) asparagine). Arg197 and Asp201 together coordinate substrate. Asp201 (proton donor) is an active-site residue. An N-linked (GlcNAc...) asparagine glycan is attached at Asn369.

The protein belongs to the glycosyl hydrolase 27 family. In terms of assembly, homodimer.

Its subcellular location is the lysosome. The enzyme catalyses Cleavage of non-reducing alpha-(1-&gt;3)-N-acetylgalactosamine residues from human blood group A and AB mucin glycoproteins, Forssman hapten and blood group A lacto series glycolipids.. It catalyses the reaction a neolactoside IV(3)-alpha-GalNAc,IV(2)-alpha-Fuc-nLc4Cer(d18:1(4E)) + H2O = a neolactoside IV(2)-alpha-Fuc-nLc4Cer(d18:1(4E)) + N-acetyl-alpha-D-galactosamine. It carries out the reaction a neolactoside IV(3)-alpha-GalNAc,IV(2)-alpha-Fuc-nLc4Cer(d18:0) + H2O = a neolactoside IV(2)-alpha-Fuc-nLc4Cer(d18:0) + N-acetyl-alpha-D-galactosamine. The catalysed reaction is a globoside IV3GalNAc-Gb4Cer + H2O = N-acetyl-alpha-D-galactosamine + a globoside Gb4Cer. In terms of biological role, removes terminal alpha-N-acetylgalactosamine residues from glycolipids and glycopeptides. Required for the breakdown of glycolipids. The polypeptide is Alpha-N-acetylgalactosaminidase (NAGA) (Gallus gallus (Chicken)).